The chain runs to 323 residues: 1D-myo-inositol 2-acetamido-2-deoxy-alpha-D-glucopyranoside deacetylase 1 (323 aa).

Zn(2+) is bound by residues H30, D33, and H165.

Belongs to the MshB deacetylase family. Zn(2+) serves as cofactor.

It carries out the reaction 1D-myo-inositol 2-acetamido-2-deoxy-alpha-D-glucopyranoside + H2O = 1D-myo-inositol 2-amino-2-deoxy-alpha-D-glucopyranoside + acetate. In terms of biological role, catalyzes the deacetylation of 1D-myo-inositol 2-acetamido-2-deoxy-alpha-D-glucopyranoside (GlcNAc-Ins) in the mycothiol biosynthesis pathway. This Catenulispora acidiphila (strain DSM 44928 / JCM 14897 / NBRC 102108 / NRRL B-24433 / ID139908) protein is 1D-myo-inositol 2-acetamido-2-deoxy-alpha-D-glucopyranoside deacetylase 1.